The primary structure comprises 365 residues: Probable galacturonosyltransferase-like 10 (365 aa).

Residues 1 to 10 lie on the Cytoplasmic side of the membrane; it reads MMSGSRLASR. The chain crosses the membrane as a helical; Signal-anchor for type II membrane protein span at residues 11–31; the sequence is LIIIFSIISTSFFTVESIRLF. Residues 32-365 lie on the Lumenal side of the membrane; the sequence is PDSFDDASSD…LQYNQELEIL (334 aa). Asn209 is a glycosylation site (N-linked (GlcNAc...) asparagine).

This sequence belongs to the glycosyltransferase 8 family.

The protein resides in the golgi apparatus membrane. It functions in the pathway glycan metabolism; pectin biosynthesis. Its function is as follows. May be involved in pectin and/or xylans biosynthesis in cell walls. The sequence is that of Probable galacturonosyltransferase-like 10 (GATL10) from Arabidopsis thaliana (Mouse-ear cress).